The following is a 286-amino-acid chain: D-tagatose-1,6-bisphosphate aldolase subunit KbaY (286 aa).

Asp-82 (proton donor) is an active-site residue. 2 residues coordinate Zn(2+): His-83 and His-180. Dihydroxyacetone phosphate is bound at residue Gly-181. His-208 lines the Zn(2+) pocket. Residues 209-211 (GAS) and 230-233 (NVAT) each bind dihydroxyacetone phosphate.

Belongs to the class II fructose-bisphosphate aldolase family. TagBP aldolase KbaY subfamily. As to quaternary structure, homotetramer. Forms a complex with KbaZ. Zn(2+) serves as cofactor.

The catalysed reaction is D-tagatofuranose 1,6-bisphosphate = D-glyceraldehyde 3-phosphate + dihydroxyacetone phosphate. Its pathway is carbohydrate metabolism; D-tagatose 6-phosphate degradation; D-glyceraldehyde 3-phosphate and glycerone phosphate from D-tagatose 6-phosphate: step 2/2. In terms of biological role, catalytic subunit of the tagatose-1,6-bisphosphate aldolase KbaYZ, which catalyzes the reversible aldol condensation of dihydroxyacetone phosphate (DHAP or glycerone-phosphate) with glyceraldehyde 3-phosphate (G3P) to produce tagatose 1,6-bisphosphate (TBP). Requires KbaZ subunit for full activity and stability. This is D-tagatose-1,6-bisphosphate aldolase subunit KbaY from Escherichia coli O17:K52:H18 (strain UMN026 / ExPEC).